A 375-amino-acid polypeptide reads, in one-letter code: UDP-N-acetylglucosamine--N-acetylmuramyl-(pentapeptide) pyrophosphoryl-undecaprenol N-acetylglucosamine transferase (375 aa).

UDP-N-acetyl-alpha-D-glucosamine is bound by residues 13–15 (TGG), asparagine 124, arginine 165, serine 193, and glutamine 294.

It belongs to the glycosyltransferase 28 family. MurG subfamily.

The protein localises to the cell inner membrane. The catalysed reaction is di-trans,octa-cis-undecaprenyl diphospho-N-acetyl-alpha-D-muramoyl-L-alanyl-D-glutamyl-meso-2,6-diaminopimeloyl-D-alanyl-D-alanine + UDP-N-acetyl-alpha-D-glucosamine = di-trans,octa-cis-undecaprenyl diphospho-[N-acetyl-alpha-D-glucosaminyl-(1-&gt;4)]-N-acetyl-alpha-D-muramoyl-L-alanyl-D-glutamyl-meso-2,6-diaminopimeloyl-D-alanyl-D-alanine + UDP + H(+). The protein operates within cell wall biogenesis; peptidoglycan biosynthesis. Its function is as follows. Cell wall formation. Catalyzes the transfer of a GlcNAc subunit on undecaprenyl-pyrophosphoryl-MurNAc-pentapeptide (lipid intermediate I) to form undecaprenyl-pyrophosphoryl-MurNAc-(pentapeptide)GlcNAc (lipid intermediate II). The chain is UDP-N-acetylglucosamine--N-acetylmuramyl-(pentapeptide) pyrophosphoryl-undecaprenol N-acetylglucosamine transferase from Brucella anthropi (strain ATCC 49188 / DSM 6882 / CCUG 24695 / JCM 21032 / LMG 3331 / NBRC 15819 / NCTC 12168 / Alc 37) (Ochrobactrum anthropi).